Consider the following 557-residue polypeptide: Arginine--tRNA ligase (557 aa).

The short motif at 132-142 (ANPTGNLHLGH) is the 'HIGH' region element.

The protein belongs to the class-I aminoacyl-tRNA synthetase family. In terms of assembly, monomer.

It localises to the cytoplasm. The enzyme catalyses tRNA(Arg) + L-arginine + ATP = L-arginyl-tRNA(Arg) + AMP + diphosphate. This chain is Arginine--tRNA ligase, found in Geobacillus thermodenitrificans (strain NG80-2).